The sequence spans 257 residues: Imidazole glycerol phosphate synthase subunit HisF (257 aa).

Residues D12 and D131 contribute to the active site.

It belongs to the HisA/HisF family. As to quaternary structure, heterodimer of HisH and HisF.

It localises to the cytoplasm. It catalyses the reaction 5-[(5-phospho-1-deoxy-D-ribulos-1-ylimino)methylamino]-1-(5-phospho-beta-D-ribosyl)imidazole-4-carboxamide + L-glutamine = D-erythro-1-(imidazol-4-yl)glycerol 3-phosphate + 5-amino-1-(5-phospho-beta-D-ribosyl)imidazole-4-carboxamide + L-glutamate + H(+). The protein operates within amino-acid biosynthesis; L-histidine biosynthesis; L-histidine from 5-phospho-alpha-D-ribose 1-diphosphate: step 5/9. IGPS catalyzes the conversion of PRFAR and glutamine to IGP, AICAR and glutamate. The HisF subunit catalyzes the cyclization activity that produces IGP and AICAR from PRFAR using the ammonia provided by the HisH subunit. This Rhodococcus opacus (strain B4) protein is Imidazole glycerol phosphate synthase subunit HisF.